A 441-amino-acid chain; its full sequence is Enolase (441 aa).

Q164 is a (2R)-2-phosphoglycerate binding site. E206 (proton donor) is an active-site residue. Mg(2+) is bound by residues D243, E289, and D316. Residues K341, R370, S371, and K392 each contribute to the (2R)-2-phosphoglycerate site. K341 functions as the Proton acceptor in the catalytic mechanism.

This sequence belongs to the enolase family. Requires Mg(2+) as cofactor.

It is found in the cytoplasm. It localises to the secreted. The protein resides in the cell surface. The catalysed reaction is (2R)-2-phosphoglycerate = phosphoenolpyruvate + H2O. It functions in the pathway carbohydrate degradation; glycolysis; pyruvate from D-glyceraldehyde 3-phosphate: step 4/5. In terms of biological role, catalyzes the reversible conversion of 2-phosphoglycerate (2-PG) into phosphoenolpyruvate (PEP). It is essential for the degradation of carbohydrates via glycolysis. The protein is Enolase of Leuconostoc citreum (strain KM20).